We begin with the raw amino-acid sequence, 708 residues long: MESNQSNNGGSGNAALNRGGRYVPPHLRGGDGGAAAAASAGGDDRRGGAGGGGYRRGGGNSGGGGGGGYDRGYNDNRDDRDNRGGSGGYGRDRNYEDRGYNGGGGGGGNRGYNNNRGGGGGGYNRQDRGDGGSSNFSRGGYNNRDEGSDNRGSGRSYNNDRRDNGGDGQNTRWNNLDAPPSRGTSKWENRGARDERIEQELFSGQLSGINFDKYEEIPVEATGDDVPQPISLFSDLSLHEWIEENIKTAGYDRPTPVQKYSIPALQGGRDLMSCAQTGSGKTAAFLVPLVNAILQDGPDAVHRSVTSSGGRKKQYPSALVLSPTRELSLQIFNESRKFAYRTPITSALLYGGRENYKDQIHKLRLGCHILIATPGRLIDVMDQGLIGMEGCRYLVLDEADRMLDMGFEPQIRQIVECNRMPSKEERITAMFSATFPKEIQLLAQDFLKENYVFLAVGRVGSTSENIMQKIVWVEEDEKRSYLMDLLDATGDSSLTLVFVETKRGASDLAYYLNRQNYEVVTIHGDLKQFEREKHLDLFRTGTAPILVATAVAARGLDIPNVKHVINYDLPSDVDEYVHRIGRTGRVGNVGLATSFFNDKNRNIARELMDLIVEANQELPDWLEGMSGDMRSGGGYRGRGGRGNGQRFGGRDHRYQGGSGNGGGGNGGGGGFGGGGQRSGGGGGFQSGGGGGRQQQQQQRAQPQQDWWS.

Positions 1–21 (MESNQSNNGGSGNAALNRGGR) are enriched in low complexity. The tract at residues 1-191 (MESNQSNNGG…RGTSKWENRG (191 aa)) is disordered. Gly residues predominate over residues 48–70 (GAGGGGYRRGGGNSGGGGGGGYD). Basic and acidic residues-rich tracts occupy residues 72–83 (GYNDNRDDRDNR) and 90–99 (GRDRNYEDRG). Over residues 100-123 (YNGGGGGGGNRGYNNNRGGGGGGY) the composition is skewed to gly residues. The Q motif motif lies at 231 to 259 (SLFSDLSLHEWIEENIKTAGYDRPTPVQK). The 192-residue stretch at 262–453 (IPALQGGRDL…QDFLKENYVF (192 aa)) folds into the Helicase ATP-binding domain. 275 to 282 (AQTGSGKT) is an ATP binding site. The DEAD box signature appears at 397-400 (DEAD). In terms of domain architecture, Helicase C-terminal spans 465-626 (NIMQKIVWVE…ELPDWLEGMS (162 aa)). Residues 623-708 (EGMSGDMRSG…RAQPQQDWWS (86 aa)) are disordered. 2 stretches are compositionally biased toward gly residues: residues 630-647 (RSGGGYRGRGGRGNGQRF) and 656-692 (GGSGNGGGGNGGGGGFGGGGQRSGGGGGFQSGGGGGR). A compositionally biased stretch (polar residues) spans 699–708 (RAQPQQDWWS).

The protein belongs to the DEAD box helicase family. DDX3/DED1 subfamily. As to quaternary structure, binds RNA as a monomer at low laf-1 concentrations and as a dimer at high laf-1 concentrations. In terms of tissue distribution, expressed in the germline and soma of young adult hermaphrodites.

Its subcellular location is the cytoplasm. The protein localises to the cytoplasmic granule. It localises to the nucleus. It is found in the stress granule. The protein resides in the inflammasome. Its subcellular location is the cell membrane. The protein localises to the cell projection. It localises to the lamellipodium. The catalysed reaction is ATP + H2O = ADP + phosphate + H(+). Its function is as follows. Multifunctional ATP-dependent RNA helicase. Plays a role in RNA remodeling, but is not required for RNA unwinding. Binds to RNA in a concentration-dependent manner to stimulate annealing between two complementary strands of RNA. This process is also dependent upon ATP; ATP reduces binding to RNA and subsequently diminishes RNA annealing. Involved in many cellular processes, which do not necessarily require its ATPase/helicase catalytic activities. Involved in the regulation of transcription and translation initiation. Involved in innate immunity. Involved in both stress and inflammatory responses. Promotes liquid-liquid phase separation of P granules, which is a process important for intracellular organization and stress granule assembly. Required for embryonic development. Plays a role in sexual cell fate determination by negatively regulating the translation of the sex determining protein tra-2. May play a protective role in the response to heat and oxidative stress. May negatively regulate extrinsic apoptotic signaling pathway via death domain receptors. May be involved in mitotic chromosome segregation. This is ATP-dependent RNA helicase laf-1 from Caenorhabditis elegans.